Here is a 199-residue protein sequence, read N- to C-terminus: Peptidyl-tRNA hydrolase (199 aa).

Y18 lines the tRNA pocket. The active-site Proton acceptor is H23. Residues Y72, N74, and N120 each coordinate tRNA.

Belongs to the PTH family. As to quaternary structure, monomer.

Its subcellular location is the cytoplasm. The enzyme catalyses an N-acyl-L-alpha-aminoacyl-tRNA + H2O = an N-acyl-L-amino acid + a tRNA + H(+). Hydrolyzes ribosome-free peptidyl-tRNAs (with 1 or more amino acids incorporated), which drop off the ribosome during protein synthesis, or as a result of ribosome stalling. In terms of biological role, catalyzes the release of premature peptidyl moieties from peptidyl-tRNA molecules trapped in stalled 50S ribosomal subunits, and thus maintains levels of free tRNAs and 50S ribosomes. In Bifidobacterium longum (strain DJO10A), this protein is Peptidyl-tRNA hydrolase.